A 215-amino-acid polypeptide reads, in one-letter code: Putative glycosyltransferase ALG1L2 (215 aa).

The segment at 40–66 (PFRARSEPEDPDTERSAFTERDSGSGL) is disordered. The span at 43-62 (ARSEPEDPDTERSAFTERDS) shows a compositional bias: basic and acidic residues.

It belongs to the glycosyltransferase group 1 family.

Functionally, putative glycosyltransferase. In Homo sapiens (Human), this protein is Putative glycosyltransferase ALG1L2 (ALG1L2).